A 226-amino-acid polypeptide reads, in one-letter code: 2-C-methyl-D-erythritol 4-phosphate cytidylyltransferase (226 aa).

It belongs to the IspD/TarI cytidylyltransferase family. IspD subfamily.

The enzyme catalyses 2-C-methyl-D-erythritol 4-phosphate + CTP + H(+) = 4-CDP-2-C-methyl-D-erythritol + diphosphate. The protein operates within isoprenoid biosynthesis; isopentenyl diphosphate biosynthesis via DXP pathway; isopentenyl diphosphate from 1-deoxy-D-xylulose 5-phosphate: step 2/6. Catalyzes the formation of 4-diphosphocytidyl-2-C-methyl-D-erythritol from CTP and 2-C-methyl-D-erythritol 4-phosphate (MEP). The polypeptide is 2-C-methyl-D-erythritol 4-phosphate cytidylyltransferase (Actinobacillus pleuropneumoniae serotype 7 (strain AP76)).